Reading from the N-terminus, the 282-residue chain is Hydroxyacylglutathione hydrolase-like protein (282 aa).

Residues His-54, His-56, Asp-58, His-59, His-110, Asp-134, and His-173 each contribute to the Zn(2+) site.

It belongs to the metallo-beta-lactamase superfamily. Glyoxalase II family. The cofactor is Zn(2+).

In terms of biological role, hydrolase acting on ester bonds. The sequence is that of Hydroxyacylglutathione hydrolase-like protein (HAGHL) from Gallus gallus (Chicken).